The following is a 207-amino-acid chain: Large ribosomal subunit protein uL4 (207 aa).

Residues Glu56–Gly76 are disordered. The span at Gly60–Gly71 shows a compositional bias: basic residues.

It belongs to the universal ribosomal protein uL4 family. Part of the 50S ribosomal subunit.

Its function is as follows. One of the primary rRNA binding proteins, this protein initially binds near the 5'-end of the 23S rRNA. It is important during the early stages of 50S assembly. It makes multiple contacts with different domains of the 23S rRNA in the assembled 50S subunit and ribosome. Functionally, forms part of the polypeptide exit tunnel. This Desulfitobacterium hafniense (strain Y51) protein is Large ribosomal subunit protein uL4.